The primary structure comprises 453 residues: Gastrin/cholecystokinin type B receptor (453 aa).

The Extracellular portion of the chain corresponds to 1–57 (MDLLKLNRSLQGPGPGSGSSLCRPGVSLLNSSSAGNLSCETPRIRGTGTRELELTIR). 3 N-linked (GlcNAc...) asparagine glycosylation sites follow: Asn-7, Asn-30, and Asn-36. Residues 58 to 79 (ITLYAVIFLMSVGGNVLIIVVL) form a helical membrane-spanning segment. Residues 80 to 87 (GLSRRLRT) are Cytoplasmic-facing. Residues 88-109 (VTNAFLLSLAVSDLLLAVACMP) traverse the membrane as a helical segment. At 110–131 (FTLLPNLMGTFIFGTVICKAVS) the chain is on the extracellular side. Cysteines 127 and 205 form a disulfide. The helical transmembrane segment at 132–150 (YLMGVSVSVSTLNLAAIAL) threads the bilayer. Residues 151–170 (ERYSAICRPLQARVWQTRSH) are Cytoplasmic-facing. A helical transmembrane segment spans residues 171-189 (AARVILATWLLSGLLMVPY). Over 190–219 (PVYTVVQPVGPRILQCMHLWPSERVQQMWS) the chain is Extracellular. A helical membrane pass occupies residues 220–242 (VLLLILLFFIPGVVMAVAYGLIS). At 243–339 (RELYLGLRFD…KLLAKKRVVR (97 aa)) the chain is on the cytoplasmic side. Residues 257–276 (SETQSRVRNQGGLPGGAAAP) are disordered. The helical transmembrane segment at 340–361 (MLLVIVLLFFVCWLPVYSANTW) threads the bilayer. Residues 362-379 (RAFDGPGARRALAGAPIS) lie on the Extracellular side of the membrane. Residues 380-400 (FIHLLSYTSACANPLVYCFMH) traverse the membrane as a helical segment. At 401–453 (RRFRQACLDTCARCCPRPPRARPRPLPDEDPPTPSIASLSRLSYTTISTLGPG) the chain is on the cytoplasmic side. The S-palmitoyl cysteine moiety is linked to residue Cys-414.

This sequence belongs to the G-protein coupled receptor 1 family.

It localises to the cell membrane. In terms of biological role, receptor for gastrin and cholecystokinin. The CCK-B receptors occur throughout the central nervous system where they modulate anxiety, analgesia, arousal, and neuroleptic activity. This receptor mediates its action by association with G proteins that activate a phosphatidylinositol-calcium second messenger system. The polypeptide is Gastrin/cholecystokinin type B receptor (Cckbr) (Mus musculus (Mouse)).